The primary structure comprises 94 residues: Co-chaperonin GroES (94 aa).

It belongs to the GroES chaperonin family. In terms of assembly, heptamer of 7 subunits arranged in a ring. Interacts with the chaperonin GroEL.

Its subcellular location is the cytoplasm. Together with the chaperonin GroEL, plays an essential role in assisting protein folding. The GroEL-GroES system forms a nano-cage that allows encapsulation of the non-native substrate proteins and provides a physical environment optimized to promote and accelerate protein folding. GroES binds to the apical surface of the GroEL ring, thereby capping the opening of the GroEL channel. In Bacillus subtilis (strain 168), this protein is Co-chaperonin GroES.